Consider the following 118-residue polypeptide: UPF0295 protein BcerKBAB4_0454 (118 aa).

2 consecutive transmembrane segments (helical) span residues 12-32 (IRTF…LGVF) and 43-63 (FMMV…WIGM).

Belongs to the UPF0295 family.

The protein resides in the cell membrane. The chain is UPF0295 protein BcerKBAB4_0454 from Bacillus mycoides (strain KBAB4) (Bacillus weihenstephanensis).